The following is a 313-amino-acid chain: Porphobilinogen deaminase (313 aa).

C242 carries the post-translational modification S-(dipyrrolylmethanemethyl)cysteine.

The protein belongs to the HMBS family. As to quaternary structure, monomer. Dipyrromethane is required as a cofactor.

The enzyme catalyses 4 porphobilinogen + H2O = hydroxymethylbilane + 4 NH4(+). The protein operates within porphyrin-containing compound metabolism; protoporphyrin-IX biosynthesis; coproporphyrinogen-III from 5-aminolevulinate: step 2/4. Its function is as follows. Tetrapolymerization of the monopyrrole PBG into the hydroxymethylbilane pre-uroporphyrinogen in several discrete steps. The sequence is that of Porphobilinogen deaminase from Pseudomonas syringae pv. tomato (strain ATCC BAA-871 / DC3000).